The following is a 191-amino-acid chain: ATP synthase subunit b 2 (191 aa).

The segment covering 1–12 (MAESHGEAKGGE) has biased composition (basic and acidic residues). Residues 1 to 31 (MAESHGEAKGGEAKGTASAHTEAEGGHGFPP) are disordered. Residues 38-60 (PSQIASLVIAFVALYVIVSRVAL) form a helical membrane-spanning segment.

Belongs to the ATPase B chain family. In terms of assembly, F-type ATPases have 2 components, F(1) - the catalytic core - and F(0) - the membrane proton channel. F(1) has five subunits: alpha(3), beta(3), gamma(1), delta(1), epsilon(1). F(0) has three main subunits: a(1), b(2) and c(10-14). The alpha and beta chains form an alternating ring which encloses part of the gamma chain. F(1) is attached to F(0) by a central stalk formed by the gamma and epsilon chains, while a peripheral stalk is formed by the delta and b chains.

Its subcellular location is the cell inner membrane. In terms of biological role, f(1)F(0) ATP synthase produces ATP from ADP in the presence of a proton or sodium gradient. F-type ATPases consist of two structural domains, F(1) containing the extramembraneous catalytic core and F(0) containing the membrane proton channel, linked together by a central stalk and a peripheral stalk. During catalysis, ATP synthesis in the catalytic domain of F(1) is coupled via a rotary mechanism of the central stalk subunits to proton translocation. Its function is as follows. Component of the F(0) channel, it forms part of the peripheral stalk, linking F(1) to F(0). The b'-subunit is a diverged and duplicated form of b found in plants and photosynthetic bacteria. The sequence is that of ATP synthase subunit b 2 (atpF2) from Bradyrhizobium sp. (strain ORS 278).